Reading from the N-terminus, the 389-residue chain is Phospho-N-acetylmuramoyl-pentapeptide-transferase (389 aa).

Transmembrane regions (helical) follow at residues 25–45 (RAVM…PWVI), 73–93 (TMGG…WGDL), 97–117 (FIWI…VDDY), 135–155 (FWQS…VSEA), 190–210 (ISYP…IVGA), 222–242 (GLVI…AYVM), 258–278 (GAGE…AFLW), 286–306 (VFMG…VAVI), 311–331 (IVLF…MLQV), and 366–386 (QVVV…LSTL).

Belongs to the glycosyltransferase 4 family. MraY subfamily. Requires Mg(2+) as cofactor.

Its subcellular location is the cell inner membrane. It carries out the reaction UDP-N-acetyl-alpha-D-muramoyl-L-alanyl-gamma-D-glutamyl-meso-2,6-diaminopimeloyl-D-alanyl-D-alanine + di-trans,octa-cis-undecaprenyl phosphate = di-trans,octa-cis-undecaprenyl diphospho-N-acetyl-alpha-D-muramoyl-L-alanyl-D-glutamyl-meso-2,6-diaminopimeloyl-D-alanyl-D-alanine + UMP. It functions in the pathway cell wall biogenesis; peptidoglycan biosynthesis. Functionally, catalyzes the initial step of the lipid cycle reactions in the biosynthesis of the cell wall peptidoglycan: transfers peptidoglycan precursor phospho-MurNAc-pentapeptide from UDP-MurNAc-pentapeptide onto the lipid carrier undecaprenyl phosphate, yielding undecaprenyl-pyrophosphoryl-MurNAc-pentapeptide, known as lipid I. This Burkholderia vietnamiensis (strain G4 / LMG 22486) (Burkholderia cepacia (strain R1808)) protein is Phospho-N-acetylmuramoyl-pentapeptide-transferase.